The primary structure comprises 138 residues: Large ribosomal subunit protein uL16 (138 aa).

The segment covering 1 to 17 has biased composition (basic residues); sequence MLIPRKVKHRKQHHPKQ. The tract at residues 1 to 24 is disordered; that stretch reads MLIPRKVKHRKQHHPKQRGIASGG.

It belongs to the universal ribosomal protein uL16 family. Part of the 50S ribosomal subunit.

Its function is as follows. Binds 23S rRNA and is also seen to make contacts with the A and possibly P site tRNAs. The chain is Large ribosomal subunit protein uL16 from Mycolicibacterium vanbaalenii (strain DSM 7251 / JCM 13017 / BCRC 16820 / KCTC 9966 / NRRL B-24157 / PYR-1) (Mycobacterium vanbaalenii).